Consider the following 606-residue polypeptide: Proton myo-inositol cotransporter hmit-1.1 (606 aa).

Residues 1–20 are Cytoplasmic-facing; that stretch reads MVAVAAFSSSGQDKPAHTPK. Residues 21 to 41 traverse the membrane as a helical segment; it reads LGLFVYILAAASVIGGFLFGY. Residues 42 to 63 lie on the Extracellular side of the membrane; that stretch reads DTSVVSAAMLYMPDAPGLKPMD. Residues 64 to 84 traverse the membrane as a helical segment; sequence TVWQEVLVSISPGMAAVGSLM. Residues 85–96 lie on the Cytoplasmic side of the membrane; that stretch reads SGTSSDYIGRRK. Residues 97 to 117 form a helical membrane-spanning segment; it reads VILGASAIFTIGALVCAASVN. Position 118 (K118) is a topological domain, extracellular. Residues 119-139 traverse the membrane as a helical segment; sequence IMLLVGRVLLGIAIGFASMIV. The Cytoplasmic portion of the chain corresponds to 140–152; that stretch reads PVYLGETAPTHVR. The helical transmembrane segment at 153–173 threads the bilayer; sequence GMLVAAFALMISFGQVVANIT. The Extracellular segment spans residues 174–188; it reads GGAFSYIDPYNVGWR. A helical membrane pass occupies residues 189-209; sequence LMFAFAAVPSIIQFVCFMFLP. The Cytoplasmic portion of the chain corresponds to 210–278; that stretch reads ETPRWLYENG…RILKTPHVLK (69 aa). Residues 279 to 299 form a helical membrane-spanning segment; sequence ACFIGSMLQAFQQLAGINTIL. Topologically, residues 300 to 317 are extracellular; that stretch reads YYTADIIRSSGISNNHTT. A glycan (N-linked (GlcNAc...) asparagine) is linked at N314. The helical transmembrane segment at 318-338 threads the bilayer; that stretch reads IWISVLLSLCNFIGPFVPMSL. Over 339 to 345 the chain is Cytoplasmic; sequence IEKVGRR. Residues 346 to 366 form a helical membrane-spanning segment; that stretch reads IIFLFSCGLVVLSLVFIGVAF. The Extracellular segment spans residues 367-464; it reads LLVNHDSAAT…EKYYCDTKYT (98 aa). N387 and N445 each carry an N-linked (GlcNAc...) asparagine glycan. The helical transmembrane segment at 465–485 threads the bilayer; sequence LLPIIACGVYLLTFSSGFTSL. Residues 486–501 are Cytoplasmic-facing; that stretch reads PWVLNSEFYPMWARST. Residues 502-522 form a helical membrane-spanning segment; the sequence is CVAISTTSNWVFNLIIALTYL. At 523–531 the chain is on the extracellular side; it reads SLTQVIGKY. Residues 532-552 traverse the membrane as a helical segment; sequence GAFWLYAGLTVIAFIFILFLV. At 553–606 the chain is on the cytoplasmic side; that stretch reads PETKGYSIEEVEMLFMNKKQRREAESRRRETVTEVRSRMNSTVSFGQHNEVHKY.

This sequence belongs to the major facilitator superfamily. Sugar transporter (TC 2.A.1.1) family. In terms of tissue distribution, expressed in the intestine.

Its subcellular location is the cell membrane. It catalyses the reaction myo-inositol(out) + H(+)(out) = myo-inositol(in) + H(+)(in). In terms of biological role, h(+)-myo-inositol cotransporter. Probably by promoting the transport of myo-inositol regulates intracellular osmosis in response to hyperosmotic stress. This Caenorhabditis elegans protein is Proton myo-inositol cotransporter hmit-1.1.